The primary structure comprises 942 residues: Protein NLP1 (942 aa).

A compositionally biased stretch (pro residues) spans 1–11; sequence MEQKPSPPPPP. Disordered stretches follow at residues 1-32, 77-106, 594-620, 723-753, and 759-778; these read MEQK…GDIA, TTPA…VSPA, VKEN…TKTE, FQLE…PSCS, and SLGC…APQL. Gly residues predominate over residues 21–32; it reads MGCGMGGTGDIA. Residues 597 to 609 are compositionally biased toward polar residues; sequence NTCSSDPSNSNSD. The region spanning 609–690 is the RWP-RK domain; sequence DKAVEKRRTK…IDSVHGPEGT (82 aa). Low complexity predominate over residues 743 to 753; it reads SGSNSISPSCS. Positions 765 to 774 are enriched in polar residues; sequence VPKTQQQHGS. The 84-residue stretch at 844–927 folds into the PB1 domain; sequence SLKIKAIYGE…QTVRILVNPS (84 aa).

Its subcellular location is the nucleus. Probable transcription factor. The chain is Protein NLP1 (NLP1) from Oryza sativa subsp. japonica (Rice).